The following is a 299-amino-acid chain: Recombination-associated protein RdgC (299 aa).

Belongs to the RdgC family.

It is found in the cytoplasm. The protein localises to the nucleoid. May be involved in recombination. The sequence is that of Recombination-associated protein RdgC from Neisseria meningitidis serogroup B (strain ATCC BAA-335 / MC58).